Here is a 421-residue protein sequence, read N- to C-terminus: Imidazolonepropionase (421 aa).

Positions 81 and 83 each coordinate Fe(3+). Residues His81 and His83 each contribute to the Zn(2+) site. Residues Arg90, Tyr153, and His186 each coordinate 4-imidazolone-5-propanoate. An N-formimidoyl-L-glutamate-binding site is contributed by Tyr153. A Fe(3+)-binding site is contributed by His251. His251 is a binding site for Zn(2+). Glu254 is a binding site for 4-imidazolone-5-propanoate. Asp326 provides a ligand contact to Fe(3+). Asp326 serves as a coordination point for Zn(2+). Asn328 and Gly330 together coordinate N-formimidoyl-L-glutamate. Ser331 is a binding site for 4-imidazolone-5-propanoate.

It belongs to the metallo-dependent hydrolases superfamily. HutI family. Requires Zn(2+) as cofactor. The cofactor is Fe(3+).

Its subcellular location is the cytoplasm. The catalysed reaction is 4-imidazolone-5-propanoate + H2O = N-formimidoyl-L-glutamate. Its pathway is amino-acid degradation; L-histidine degradation into L-glutamate; N-formimidoyl-L-glutamate from L-histidine: step 3/3. Catalyzes the hydrolytic cleavage of the carbon-nitrogen bond in imidazolone-5-propanoate to yield N-formimidoyl-L-glutamate. It is the third step in the universal histidine degradation pathway. The protein is Imidazolonepropionase of Streptococcus pyogenes serotype M6 (strain ATCC BAA-946 / MGAS10394).